Here is a 345-residue protein sequence, read N- to C-terminus: 2-oxoglutarate and iron-dependent oxygenase domain-containing protein 2 (345 aa).

Residues 207–301 enclose the Fe2OG dioxygenase domain; sequence DSHKAFVVKY…RWNLIIWMRA (95 aa). Residues H227, D229, and H282 each coordinate Fe cation. R292 provides a ligand contact to 2-oxoglutarate.

Belongs to the OGFOD2 family. It depends on Fe(2+) as a cofactor. L-ascorbate is required as a cofactor.

This chain is 2-oxoglutarate and iron-dependent oxygenase domain-containing protein 2 (ogfod2), found in Danio rerio (Zebrafish).